A 560-amino-acid chain; its full sequence is Protein AATF (560 aa).

Ala2 is subject to N-acetylalanine. Residues Ser61 and Ser63 each carry the phosphoserine modification. The tract at residues 76-208 is disordered; sequence TSRKAWNEDH…GDRNSEDDGV (133 aa). Residues 94–129 show a composition bias toward acidic residues; it reads SDEEISDEEGSGDEDSEGLGLEEYDEDDLGAAEEQE. Residues Ser150 and Ser155 each carry the phosphoserine modification. Residues 156–165 are compositionally biased toward basic and acidic residues; that stretch reads DFEKFTKGMD. A compositionally biased stretch (acidic residues) spans 168-195; the sequence is GSSEEEEDEESGMEEGDDAEDSQGESEE. Phosphoserine occurs at positions 203, 273, 316, 320, and 321. Positions 273 to 315 are POLR2J binding; it reads SALKNSHKALKALLRSLVGLQEELLFQYPDTRYLVDGTKPNAG. A disordered region spans residues 309-333; it reads GTKPNAGSEEISSEDDELVEEKKQQ. The interval 316 to 372 is RB1 binding; the sequence is SEEISSEDDELVEEKKQQRRRVPAKRKLEMEDYPSFMAKRFADFTVYRNRTLQKWHD. The RB1 and SP1 binding stretch occupies residues 373–472; the sequence is KTKLASGKLG…FYHQLLRELI (100 aa).

The protein belongs to the AATF family. As to quaternary structure, part of the small subunit (SSU) processome, composed of more than 70 proteins and the RNA chaperone small nucleolar RNA (snoRNA) U3. Interacts with POLR2J, RB1/RB, RBL1/P107 and RBL2/P130. Interacts with PAWR and SP1. May also bind MAPT. In terms of processing, hyperphosphorylated during the G1/S phase transition. Ubiquitously expressed. Expressed at high levels in brain, heart, kidney, placenta and thymus.

The protein localises to the nucleus. Its subcellular location is the nucleolus. Part of the small subunit (SSU) processome, first precursor of the small eukaryotic ribosomal subunit. During the assembly of the SSU processome in the nucleolus, many ribosome biogenesis factors, an RNA chaperone and ribosomal proteins associate with the nascent pre-rRNA and work in concert to generate RNA folding, modifications, rearrangements and cleavage as well as targeted degradation of pre-ribosomal RNA by the RNA exosome. May function as a general inhibitor of the histone deacetylase HDAC1. Binding to the pocket region of RB1 may displace HDAC1 from RB1/E2F complexes, leading to activation of E2F target genes and cell cycle progression. Conversely, displacement of HDAC1 from SP1 bound to the CDKN1A promoter leads to increased expression of this CDK inhibitor and blocks cell cycle progression. Also antagonizes PAWR mediated induction of aberrant amyloid peptide production in Alzheimer disease (presenile and senile dementia), although the molecular basis for this phenomenon has not been described to date. The polypeptide is Protein AATF (Homo sapiens (Human)).